Here is a 162-residue protein sequence, read N- to C-terminus: MYVELVDETGQVPSEIIEQTKEVLAFAAKKLDLKESTEMSVTFVDNARSHELNLQYRETDRPTDVISLEYKPDESEFFFDEDMELPEELLEEMDPFIGELFISIDKAAEQAADYGHSIEREYGWLAVHGFLHINGYDHYMPEEESEMFALQEEILTAYGLTR.

H128, H132, and H138 together coordinate Zn(2+).

This sequence belongs to the endoribonuclease YbeY family. Zn(2+) is required as a cofactor.

The protein localises to the cytoplasm. Single strand-specific metallo-endoribonuclease involved in late-stage 70S ribosome quality control and in maturation of the 3' terminus of the 16S rRNA. The chain is Endoribonuclease YbeY from Lactococcus lactis subsp. cremoris (strain SK11).